The primary structure comprises 205 residues: MRLRYDKNAEGKLEMFNYLIKQGDSKILLDDKTVLEIGMGKGEMIVELAKAHPELNFIGLEKYPTVAAKCIKKANEYNLSNFKILIDDAFKVDEIFEGQCKVIWLTFSDPWPKARHEKRRLTHPLFLEKYRKILDKDGILKFKSDNDGLYEFSLSSLQNSNWRIIDHGIDLHNSKYNENNYQTGYERKWSARGKKINYIFAQKGE.

Residues glutamate 36, glutamate 61, aspartate 88, and aspartate 109 each coordinate S-adenosyl-L-methionine. Aspartate 109 is a catalytic residue. Lysine 113 serves as a coordination point for substrate. Residues 115 to 120 form an interaction with RNA region; it reads RHEKRR. Substrate contacts are provided by residues aspartate 145 and 183 to 186; that span reads TGYE.

It belongs to the class I-like SAM-binding methyltransferase superfamily. TrmB family.

It catalyses the reaction guanosine(46) in tRNA + S-adenosyl-L-methionine = N(7)-methylguanosine(46) in tRNA + S-adenosyl-L-homocysteine. The protein operates within tRNA modification; N(7)-methylguanine-tRNA biosynthesis. Its function is as follows. Catalyzes the formation of N(7)-methylguanine at position 46 (m7G46) in tRNA. This chain is tRNA (guanine-N(7)-)-methyltransferase, found in Mycoplasmopsis agalactiae (strain NCTC 10123 / CIP 59.7 / PG2) (Mycoplasma agalactiae).